Here is a 461-residue protein sequence, read N- to C-terminus: Argininosuccinate lyase (461 aa).

It belongs to the lyase 1 family. Argininosuccinate lyase subfamily.

It localises to the cytoplasm. The enzyme catalyses 2-(N(omega)-L-arginino)succinate = fumarate + L-arginine. The protein operates within amino-acid biosynthesis; L-arginine biosynthesis; L-arginine from L-ornithine and carbamoyl phosphate: step 3/3. The polypeptide is Argininosuccinate lyase (Clostridium beijerinckii (strain ATCC 51743 / NCIMB 8052) (Clostridium acetobutylicum)).